The sequence spans 1107 residues: Copine family protein 1 (1107 aa).

Over 1 to 22 (MVFDARLGYDPDEWEECPEPEH) the chain is Extracellular. A helical membrane pass occupies residues 23–45 (FLVFSGFTRYMLTFAAIAFVYYF). The Cytoplasmic portion of the chain corresponds to 46–1107 (FKLLDDKNKK…IRREMMHNPL (1062 aa)). Residues 67-124 (VESVLAKAGDKLHDVKEQVQQHIPESAEELMREADQYLKEQAHSVQNNVHQFAEQAAN) are a coiled coil. Low complexity predominate over residues 478–488 (QLQQNQQQHQQ). Disordered stretches follow at residues 478–501 (QLQQ…TADS) and 673–698 (HEPE…SRQV). Residues 492–501 (IDRRRTTADS) show a composition bias toward basic and acidic residues. Positions 687–698 (KNPSFEATSRQV) are enriched in polar residues. One can recognise a VWFA domain in the interval 863-1023 (NLIFGIDYTA…LSIIVVGVGD (161 aa)).

This sequence belongs to the copine family. May interact (via VWFA domain) with unc-89 (via Ig-like C2-type 1-3) and unc-96 (via C-terminus); cpna-1 binding sites for unc-89 and unc-96 are different. May interact with pat-6. May interact with lim-9 (via LIM domains) and with scpl-1 (via FCP1 homology domain). In terms of tissue distribution, expressed in body wall muscles (at protein level).

The protein localises to the basal cell membrane. It localises to the cytoplasm. It is found in the myofibril. The protein resides in the sarcomere. Its subcellular location is the m line. Its function is as follows. Involved in the assembly of dense bodies and M lines during body wall muscle development. Acts by recruiting downstream of integrin-associated protein pat-6/actopaxin several dense bodies and M line components including unc-89, lim-9, scpl-1 and unc-96 to integrin-mediated attachment sites. This chain is Copine family protein 1, found in Caenorhabditis elegans.